We begin with the raw amino-acid sequence, 873 residues long: Valine--tRNA ligase (873 aa).

Residues 43–53 (PNVTGVLHMGH) carry the 'HIGH' region motif. The 'KMSKS' region signature appears at 532–536 (KMSKS). Lys535 contacts ATP. The stretch at 802–873 (LGNLINVEEE…IEESIAALTK (72 aa)) forms a coiled coil.

This sequence belongs to the class-I aminoacyl-tRNA synthetase family. ValS type 1 subfamily. In terms of assembly, monomer.

It is found in the cytoplasm. The enzyme catalyses tRNA(Val) + L-valine + ATP = L-valyl-tRNA(Val) + AMP + diphosphate. In terms of biological role, catalyzes the attachment of valine to tRNA(Val). As ValRS can inadvertently accommodate and process structurally similar amino acids such as threonine, to avoid such errors, it has a 'posttransfer' editing activity that hydrolyzes mischarged Thr-tRNA(Val) in a tRNA-dependent manner. This Parabacteroides distasonis (strain ATCC 8503 / DSM 20701 / CIP 104284 / JCM 5825 / NCTC 11152) protein is Valine--tRNA ligase.